We begin with the raw amino-acid sequence, 304 residues long: Phosphonates import ATP-binding protein PhnC 1 (304 aa).

Positions 4–240 (VSLQNVTKLF…VIDDLYYAGS (237 aa)) constitute an ABC transporter domain. An ATP-binding site is contributed by 37–44 (GPSGAGKS). The interval 240–304 (SESTPVSHGD…TETDTGEAQL (65 aa)) is disordered. Residues 263-272 (TSVSSDMETT) are compositionally biased toward polar residues. The segment covering 289–304 (TDTETDTETDTGEAQL) has biased composition (acidic residues).

The protein belongs to the ABC transporter superfamily. Phosphonates importer (TC 3.A.1.9.1) family. In terms of assembly, the complex is composed of two ATP-binding proteins (PhnC), two transmembrane proteins (PhnE) and a solute-binding protein (PhnD).

It localises to the cell membrane. It carries out the reaction phosphonate(out) + ATP + H2O = phosphonate(in) + ADP + phosphate + H(+). Part of the ABC transporter complex PhnCDE involved in phosphonates import. Responsible for energy coupling to the transport system. The chain is Phosphonates import ATP-binding protein PhnC 1 from Haloquadratum walsbyi (strain DSM 16790 / HBSQ001).